Here is a 436-residue protein sequence, read N- to C-terminus: tRNA modification GTPase MnmE (436 aa).

(6S)-5-formyl-5,6,7,8-tetrahydrofolate-binding residues include arginine 20, glutamate 77, and lysine 117. In terms of domain architecture, TrmE-type G spans 214–360 (GLKIVIAGAP…FIKELESFCL (147 aa)). GTP is bound by residues 224-229 (NSGKSS), 243-249 (MEEAGTT), and 268-271 (DTAG). Residues serine 228 and threonine 249 each contribute to the Mg(2+) site. Position 436 (lysine 436) interacts with (6S)-5-formyl-5,6,7,8-tetrahydrofolate.

It belongs to the TRAFAC class TrmE-Era-EngA-EngB-Septin-like GTPase superfamily. TrmE GTPase family. In terms of assembly, homodimer. Heterotetramer of two MnmE and two MnmG subunits. The cofactor is K(+).

Its subcellular location is the cytoplasm. In terms of biological role, exhibits a very high intrinsic GTPase hydrolysis rate. Involved in the addition of a carboxymethylaminomethyl (cmnm) group at the wobble position (U34) of certain tRNAs, forming tRNA-cmnm(5)s(2)U34. In Bartonella quintana (strain Toulouse) (Rochalimaea quintana), this protein is tRNA modification GTPase MnmE.